The chain runs to 213 residues: MASQAVSGLSRQVRCFSTSVVRPFAKLVRPPVQIYGIEGRYATALYSAASKQNKLEQVEKELLRVAQILKEPKVAASIMNPYVKRSVKVKSLSDMTAKEKFSPLTSNLINLLAENGRLSSTPGVISAFSTMMSVHRGEVPCSVTTASPLDEATLTELKTVLKSFLSKGQILKLEVKVDPSIMGGMIVRIGEKYVDMSAKTKIQKLSRAMREIF.

Residues 1–23 (MASQAVSGLSRQVRCFSTSVVRP) constitute a mitochondrion transit peptide. The SIFI-degron signature appears at 5–23 (AVSGLSRQVRCFSTSVVRP). N6-acetyllysine is present on residues K54, K60, K70, and K73. At K90 the chain carries N6-succinyllysine. N6-acetyllysine; alternate occurs at positions 100, 158, and 162. N6-succinyllysine; alternate occurs at positions 100, 158, and 162. K172, K176, and K192 each carry N6-acetyllysine. K199 is modified (N6-succinyllysine).

The protein belongs to the ATPase delta chain family. In terms of assembly, component of the ATP synthase complex composed at least of ATP5F1A/subunit alpha, ATP5F1B/subunit beta, ATP5MC1/subunit c (homooctomer), MT-ATP6/subunit a, MT-ATP8/subunit 8, ATP5ME/subunit e, ATP5MF/subunit f, ATP5MG/subunit g, ATP5MK/subunit k, ATP5MJ/subunit j, ATP5F1C/subunit gamma, ATP5F1D/subunit delta, ATP5F1E/subunit epsilon, ATP5PF/subunit F6, ATP5PB/subunit b, ATP5PD/subunit d, ATP5PO/subunit OSCP. ATP synthase complex consists of a soluble F(1) head domain (subunits alpha(3) and beta(3)) - the catalytic core - and a membrane F(0) domain - the membrane proton channel (subunits c, a, 8, e, f, g, k and j). These two domains are linked by a central stalk (subunits gamma, delta, and epsilon) rotating inside the F1 region and a stationary peripheral stalk (subunits F6, b, d, and OSCP). In terms of processing, acetylation at Lys-162 decreases ATP production. Deacetylated by SIRT3. Post-translationally, in response to mitochondrial stress, the precursor protein is ubiquitinated by the SIFI complex in the cytoplasm before mitochondrial import, leading to its degradation. Within the SIFI complex, UBR4 initiates ubiquitin chain that are further elongated or branched by KCMF1.

It localises to the mitochondrion. It is found in the mitochondrion inner membrane. Subunit OSCP, of the mitochondrial membrane ATP synthase complex (F(1)F(0) ATP synthase or Complex V) that produces ATP from ADP in the presence of a proton gradient across the membrane which is generated by electron transport complexes of the respiratory chain. ATP synthase complex consist of a soluble F(1) head domain - the catalytic core - and a membrane F(1) domain - the membrane proton channel. These two domains are linked by a central stalk rotating inside the F(1) region and a stationary peripheral stalk. During catalysis, ATP synthesis in the catalytic domain of F(1) is coupled via a rotary mechanism of the central stalk subunits to proton translocation. In vivo, can only synthesize ATP although its ATP hydrolase activity can be activated artificially in vitro. Part of the complex F(0) domain. Part of the complex F(0) domain and the peripheric stalk, which acts as a stator to hold the catalytic alpha(3)beta(3) subcomplex and subunit a/ATP6 static relative to the rotary elements. The protein is ATP synthase peripheral stalk subunit OSCP, mitochondrial of Sus scrofa (Pig).